The sequence spans 352 residues: DNA integrity scanning protein DisA (352 aa).

The 141-residue stretch at 3–143 folds into the DAC domain; the sequence is DERIVLALKS…FKYSLSEVSV (141 aa). Residues G70, L88, and 101–105 contribute to the ATP site; that span reads IRHRT.

The protein belongs to the DisA family. Homooctamer. The cofactor is Mg(2+).

The enzyme catalyses 2 ATP = 3',3'-c-di-AMP + 2 diphosphate. In terms of biological role, participates in a DNA-damage check-point that is active prior to asymmetric division when DNA is damaged. DisA forms globular foci that rapidly scan along the chromosomes during sporulation, searching for lesions. When a lesion is present, DisA pauses at the lesion site. This triggers a cellular response that culminates in a temporary block in sporulation initiation. Its function is as follows. Also has diadenylate cyclase activity, catalyzing the condensation of 2 ATP molecules into cyclic di-AMP (c-di-AMP). c-di-AMP acts as a signaling molecule that couples DNA integrity with progression of sporulation. The rise in c-di-AMP level generated by DisA while scanning the chromosome, operates as a positive signal that advances sporulation; upon encountering a lesion, the DisA focus arrests at the damaged site and halts c-di-AMP synthesis. This is DNA integrity scanning protein DisA from Carboxydothermus hydrogenoformans (strain ATCC BAA-161 / DSM 6008 / Z-2901).